A 302-amino-acid polypeptide reads, in one-letter code: G-protein coupled receptor A5 (302 aa).

At 1-20 (MADSSNSSLNCTAIHDQTVL) the chain is on the extracellular side. Residues 21-41 (ILGQVFNSVWLFISVIFLYIF) form a helical membrane-spanning segment. Residues 42–50 (ACKLCFRPR) lie on the Cytoplasmic side of the membrane. Residues 51 to 71 (IYLWLSFYTLGFMLWVLCKVL) traverse the membrane as a helical segment. At 72–81 (QEYVTGKFKC) the chain is on the extracellular side. The chain crosses the membrane as a helical span at residues 82–102 (VITNCIGDFCLVFLSCIMLGI). The Cytoplasmic segment spans residues 103 to 122 (MLDRYLKIQGTLRGGMKDIH). Residues 123–143 (IGIFVSASCFGSLMIALLDGL) traverse the membrane as a helical segment. The Extracellular portion of the chain corresponds to 144–173 (HMGDSEKLQFNGTESFKCLPATSVSSYKAQ). Residues 174–194 (LMFKSIFCIICIIMCLILTCL) form a helical membrane-spanning segment. At 195–208 (TAKKVLGTRLRKKY) the chain is on the cytoplasmic side. Residues 209–229 (VIVGNVGLLSFVNILLWVMIA) form a helical membrane-spanning segment. The Extracellular portion of the chain corresponds to 230–249 (CGLLKQALESNLSLCPTKQS). The helical transmembrane segment at 250–270 (TYIYPYTMPVTVIFVLVIYLF) threads the bilayer. Residues 271–302 (SSTHMKNAMRKSGQIRHSLSSPNQVQSSFRLV) are Cytoplasmic-facing.

Belongs to the G-protein coupled receptor 1 family.

Its subcellular location is the host cell membrane. It localises to the host endoplasmic reticulum membrane. Functionally, acts as a viral G-protein coupled receptor that constitutively activates host alphai-type G-proteins, thereby inhibiting host forskolin-triggered CREB activation. The chain is G-protein coupled receptor A5 (A5) from Connochaetes taurinus (Blue wildebeest).